The chain runs to 985 residues: Alanine--tRNA ligase, mitochondrial (985 aa).

The N-terminal 23 residues, 1–23 (MAASVAAAARRLRRAIRRSPAWR), are a transit peptide targeting the mitochondrion. ATP-binding positions include Arg-110, His-128, Trp-210, and 240–242 (LWN). L-alanine is bound by residues Asn-242 and Asp-265. Residue Gly-269 coordinates ATP. Zn(2+) is bound by residues His-632, His-636, Cys-749, and His-753.

It belongs to the class-II aminoacyl-tRNA synthetase family. As to quaternary structure, monomer. Requires Zn(2+) as cofactor.

Its subcellular location is the mitochondrion. The enzyme catalyses tRNA(Ala) + L-alanine + ATP = L-alanyl-tRNA(Ala) + AMP + diphosphate. The catalysed reaction is (S)-lactate + ATP + H(+) = (S)-lactoyl-AMP + diphosphate. It carries out the reaction (S)-lactoyl-AMP + L-lysyl-[protein] = N(6)-[(S)-lactoyl]-L-lysyl-[protein] + AMP + 2 H(+). In terms of biological role, catalyzes the attachment of alanine to tRNA(Ala) in a two-step reaction: alanine is first activated by ATP to form Ala-AMP and then transferred to the acceptor end of tRNA(Ala). Also edits incorrectly charged tRNA(Ala) via its editing domain. In presence of high levels of lactate, also acts as a protein lactyltransferase that mediates lactylation of lysine residues in target proteins, such as CGAS. Acts as an inhibitor of cGAS/STING signaling by catalyzing lactylation of CGAS, preventing the formation of liquid-like droplets in which CGAS is activated. This chain is Alanine--tRNA ligase, mitochondrial, found in Homo sapiens (Human).